A 338-amino-acid chain; its full sequence is Lipoate-protein ligase A (338 aa).

The BPL/LPL catalytic domain occupies 29–216 (PATQRVLFLW…AFFAHYGERV (188 aa)). ATP contacts are provided by residues Arg71, 76–79 (GAVF), and Lys134. Lys134 contacts (R)-lipoate.

The protein belongs to the LplA family. In terms of assembly, monomer.

The protein localises to the cytoplasm. The catalysed reaction is L-lysyl-[lipoyl-carrier protein] + (R)-lipoate + ATP = N(6)-[(R)-lipoyl]-L-lysyl-[lipoyl-carrier protein] + AMP + diphosphate + H(+). It participates in protein modification; protein lipoylation via exogenous pathway; protein N(6)-(lipoyl)lysine from lipoate: step 1/2. Its pathway is protein modification; protein lipoylation via exogenous pathway; protein N(6)-(lipoyl)lysine from lipoate: step 2/2. In terms of biological role, catalyzes both the ATP-dependent activation of exogenously supplied lipoate to lipoyl-AMP and the transfer of the activated lipoyl onto the lipoyl domains of lipoate-dependent enzymes. The chain is Lipoate-protein ligase A from Escherichia coli O157:H7.